A 396-amino-acid polypeptide reads, in one-letter code: S-adenosylmethionine synthase (396 aa).

His16 serves as a coordination point for ATP. Asp18 is a Mg(2+) binding site. K(+) is bound at residue Glu44. Glu57 and Gln100 together coordinate L-methionine. A flexible loop region spans residues 100–110; it reads QSVDINQGVDR. ATP is bound by residues 165 to 167, 231 to 232, Asp240, 246 to 247, Ala263, and Lys267; these read DAK, KF, and RK. L-methionine is bound at residue Asp240. Lys271 contributes to the L-methionine binding site.

It belongs to the AdoMet synthase family. Homotetramer; dimer of dimers. Mg(2+) serves as cofactor. K(+) is required as a cofactor.

It localises to the cytoplasm. The enzyme catalyses L-methionine + ATP + H2O = S-adenosyl-L-methionine + phosphate + diphosphate. It functions in the pathway amino-acid biosynthesis; S-adenosyl-L-methionine biosynthesis; S-adenosyl-L-methionine from L-methionine: step 1/1. In terms of biological role, catalyzes the formation of S-adenosylmethionine (AdoMet) from methionine and ATP. The overall synthetic reaction is composed of two sequential steps, AdoMet formation and the subsequent tripolyphosphate hydrolysis which occurs prior to release of AdoMet from the enzyme. This Azotobacter vinelandii (strain DJ / ATCC BAA-1303) protein is S-adenosylmethionine synthase.